We begin with the raw amino-acid sequence, 529 residues long: Potassium voltage-gated channel subfamily A member 6 (529 aa).

Residues 1–35 are disordered; it reads MRSEKSLTLAAPGEVRGPEGEQQDAGEFQEAEGGG. Topologically, residues 1–171 are cytoplasmic; the sequence is MRSEKSLTLA…LLFEYPESSG (171 aa). Position 3 is a phosphoserine (S3). Positions 21–30 are enriched in acidic residues; that stretch reads EQQDAGEFQE. Residues 172–193 traverse the membrane as a helical segment; sequence PARGIAIVSVLVILISIVIFCL. Residues 194–262 lie on the Extracellular side of the membrane; it reads ETLPQFRADG…TLGGSFFTDP (69 aa). Positions 203 to 238 are disordered; it reads GRGGSNEGSGTRLSPASRSHEEEDEDEDSYAFPGSI. Residues 210–219 are compositionally biased toward polar residues; the sequence is GSGTRLSPAS. The chain crosses the membrane as a helical span at residues 263–284; the sequence is FFLVETLCIVWFTFELLVRFSA. The S-palmitoyl cysteine moiety is linked to residue C285. Residues 285-295 are Cytoplasmic-facing; it reads CPSKAAFFRNI. Residues 296-316 traverse the membrane as a helical segment; the sequence is MNIIDLVAIFPYFITLGTELV. Residues 317–337 lie on the Extracellular side of the membrane; sequence QRHEQQSVSGGSGQNGQQAMS. The chain crosses the membrane as a helical; Voltage-sensor span at residues 338-358; the sequence is LAILRVIRLVRVFRIFKLSRH. Topologically, residues 359-373 are cytoplasmic; the sequence is SKGLQILGKTLQASM. Residues 360–373 form an S4-S5 linker region; it reads KGLQILGKTLQASM. A helical membrane pass occupies residues 374 to 395; the sequence is RELGLLIFFLFIGVILFSSAVY. Topologically, residues 396-409 are extracellular; it reads FAEADDVDSLFPSI. The helical intramembrane region spans 410–421; sequence PDAFWWAVVTMT. The Selectivity filter motif lies at 422–427; sequence TVGYGD. The stretch at 422 to 429 is an intramembrane region; it reads TVGYGDMY. At 430–436 the chain is on the extracellular side; sequence PMTVGGK. The chain crosses the membrane as a helical span at residues 437-465; that stretch reads IVGSLCAIAGVLTIALPVPVIVSNFNYFY. At 466-529 the chain is on the cytoplasmic side; sequence HRETEQEEQG…YAEKRMLTEV (64 aa). The disordered stretch occupies residues 488 to 513; sequence DLKATDNGLGKPDFAEASRERRPSYL. Residues 500–510 show a composition bias toward basic and acidic residues; the sequence is DFAEASRERRP. A Phosphoserine; by PKA modification is found at S511. The short motif at 527–529 is the PDZ-binding element; sequence TEV.

The protein belongs to the potassium channel family. A (Shaker) (TC 1.A.1.2) subfamily. Kv1.6/KCNA6 sub-subfamily. In terms of assembly, homotetramer and heterotetramer of potassium channel proteins. Interacts with KCNAB1 and KCNAB2.

The protein localises to the cell membrane. The enzyme catalyses K(+)(in) = K(+)(out). Its function is as follows. Voltage-gated potassium channel that mediates transmembrane potassium transport in excitable membranes. Forms tetrameric potassium-selective channels through which potassium ions pass in accordance with their electrochemical gradient. The channel alternates between opened and closed conformations in response to the voltage difference across the membrane. Can form functional homotetrameric channels and heterotetrameric channels that contain variable proportions of KCNA1, KCNA2, KCNA4, KCNA6, and possibly other family members as well; channel properties depend on the type of alpha subunits that are part of the channel. Channel properties are modulated by cytoplasmic beta subunits that regulate the subcellular location of the alpha subunits and promote rapid inactivation. Homotetrameric channels display rapid activation and slow inactivation. The protein is Potassium voltage-gated channel subfamily A member 6 (Kcna6) of Mus musculus (Mouse).